The following is a 476-amino-acid chain: Probable cytosolic Fe-S cluster assembly factor GH10760 (476 aa).

[4Fe-4S] cluster is bound by residues Cys-23, Cys-68, Cys-71, Cys-74, Cys-187, Cys-243, Cys-395, and Cys-399.

It belongs to the NARF family.

Component of the cytosolic iron-sulfur (Fe/S) protein assembly machinery. Required for maturation of extramitochondrial Fe/S proteins. The protein is Probable cytosolic Fe-S cluster assembly factor GH10760 of Drosophila grimshawi (Hawaiian fruit fly).